The sequence spans 410 residues: Gamma-glutamyl phosphate reductase (410 aa).

Belongs to the gamma-glutamyl phosphate reductase family.

It localises to the cytoplasm. The enzyme catalyses L-glutamate 5-semialdehyde + phosphate + NADP(+) = L-glutamyl 5-phosphate + NADPH + H(+). The protein operates within amino-acid biosynthesis; L-proline biosynthesis; L-glutamate 5-semialdehyde from L-glutamate: step 2/2. Its function is as follows. Catalyzes the NADPH-dependent reduction of L-glutamate 5-phosphate into L-glutamate 5-semialdehyde and phosphate. The product spontaneously undergoes cyclization to form 1-pyrroline-5-carboxylate. The sequence is that of Gamma-glutamyl phosphate reductase from Campylobacter jejuni subsp. jejuni serotype O:2 (strain ATCC 700819 / NCTC 11168).